A 474-amino-acid chain; its full sequence is UDP-N-acetylmuramate--L-alanine ligase (474 aa).

119 to 125 (GTHGKTT) lines the ATP pocket.

This sequence belongs to the MurCDEF family.

It localises to the cytoplasm. The catalysed reaction is UDP-N-acetyl-alpha-D-muramate + L-alanine + ATP = UDP-N-acetyl-alpha-D-muramoyl-L-alanine + ADP + phosphate + H(+). It functions in the pathway cell wall biogenesis; peptidoglycan biosynthesis. Functionally, cell wall formation. The sequence is that of UDP-N-acetylmuramate--L-alanine ligase from Jannaschia sp. (strain CCS1).